A 283-amino-acid chain; its full sequence is Bifunctional protein FolD (283 aa).

Residues 164 to 166, serine 189, and isoleucine 230 contribute to the NADP(+) site; that span reads GRS.

This sequence belongs to the tetrahydrofolate dehydrogenase/cyclohydrolase family. In terms of assembly, homodimer.

It carries out the reaction (6R)-5,10-methylene-5,6,7,8-tetrahydrofolate + NADP(+) = (6R)-5,10-methenyltetrahydrofolate + NADPH. The enzyme catalyses (6R)-5,10-methenyltetrahydrofolate + H2O = (6R)-10-formyltetrahydrofolate + H(+). The protein operates within one-carbon metabolism; tetrahydrofolate interconversion. Functionally, catalyzes the oxidation of 5,10-methylenetetrahydrofolate to 5,10-methenyltetrahydrofolate and then the hydrolysis of 5,10-methenyltetrahydrofolate to 10-formyltetrahydrofolate. This chain is Bifunctional protein FolD, found in Lacticaseibacillus paracasei (strain ATCC 334 / BCRC 17002 / CCUG 31169 / CIP 107868 / KCTC 3260 / NRRL B-441) (Lactobacillus paracasei).